The sequence spans 144 residues: Hemoglobin subunit alpha-1 (144 aa).

Ser-1 carries the post-translational modification N-acetylserine. Residues Ser-1–Arg-144 form the Globin domain. Position 61 (His-61) interacts with O2. Position 90 (His-90) interacts with heme b.

This sequence belongs to the globin family. Heterotetramer of two alpha chains and two beta chains. Red blood cells.

Functionally, involved in oxygen transport from gills to the various peripheral tissues. This Oncorhynchus mykiss (Rainbow trout) protein is Hemoglobin subunit alpha-1 (hba1).